The primary structure comprises 597 residues: Spastin (597 aa).

Topologically, residues 1–20 (MPNNDILRPLAIPAKYVGSF) are cytoplasmic. The helical intramembrane region spans 21 to 37 (LVFLYNGLYFVFVVNLW). At 38–597 (SRLFGKATKT…DWNRLYGSNA (560 aa)) the chain is on the cytoplasmic side. The tract at residues 56 to 80 (RKLGKDMASRAPPRRGQSSEDNEDG) is disordered. In terms of domain architecture, MIT spans 91 to 168 (HHKQAYAYIA…ENTRERMDEL (78 aa)). Residues 193–289 (SARKTSSEPS…PAMMAKQSCV (97 aa)) are disordered. Over residues 214-231 (SYKQSKSYKNSTTVTTKR) the composition is skewed to polar residues. The span at 232-252 (SQASPSFSSSSSSVNSTAGSS) shows a compositional bias: low complexity.

The protein belongs to the AAA ATPase family. Spastin subfamily. Homohexamer. The homohexamer is stabilized by ATP-binding. The homohexamer may adopt a ring conformation through which microtubules pass prior to being severed. Interacts with microtubules.

Its subcellular location is the membrane. It is found in the cytoplasm. The protein resides in the cytoskeleton. The protein localises to the microtubule organizing center. It localises to the centrosome. It carries out the reaction n ATP + n H2O + a microtubule = n ADP + n phosphate + (n+1) alpha/beta tubulin heterodimers.. In terms of biological role, ATP-dependent microtubule severing protein. Microtubule severing may promote reorganization of cellular microtubule arrays and the release of microtubules from the microtubule organizing center following nucleation. This chain is Spastin, found in Nematostella vectensis (Starlet sea anemone).